Reading from the N-terminus, the 319-residue chain is GCN5-related N-acetyltransferase 5, chloroplastic (319 aa).

Residues 1-55 constitute a chloroplast transit peptide; that stretch reads MAALSISLAFSVDSLKPTQSTKFGFSSSSHRYPLLYSCKSHRSNLRFAFPPSSVS. In terms of domain architecture, N-acetyltransferase spans 109–297; the sequence is MWVRVMRHEE…KHLMRKKLLP (189 aa). Acetyl-CoA contacts are provided by residues 218-220, 226-231, 258-260, and Y265; these read MTV, RRGIGW, and DEA. The active-site Proton donor is Y265.

It belongs to the acetyltransferase family. GNAT subfamily. As to quaternary structure, oligomer. In terms of processing, autoacetylated. In terms of tissue distribution, expressed in green tissues.

The protein resides in the plastid. The protein localises to the chloroplast. It carries out the reaction an N-terminal L-alpha-aminoacyl-[protein] + acetyl-CoA = N-terminal N(alpha)-acetyl-L-alpha-aminoacyl-[protein] + CoA + H(+). The catalysed reaction is L-lysyl-[protein] + acetyl-CoA = N(6)-acetyl-L-lysyl-[protein] + CoA + H(+). It catalyses the reaction N-terminal L-alanyl-[protein] + acetyl-CoA = N-terminal N(alpha)-acetyl-L-alanyl-[protein] + CoA + H(+). The enzyme catalyses N-terminal L-seryl-[protein] + acetyl-CoA = N-terminal N(alpha)-acetyl-L-seryl-[protein] + CoA + H(+). It carries out the reaction N-terminal L-methionyl-[protein] + acetyl-CoA = N-terminal N(alpha)-acetyl-L-methionyl-[protein] + CoA + H(+). The catalysed reaction is N-terminal L-valyl-[protein] + acetyl-CoA = N-terminal N(alpha)-acetyl-L-valyl-[protein] + CoA + H(+). It catalyses the reaction N-terminal L-threonyl-[protein] + acetyl-CoA = N-terminal N(alpha)-acetyl-L-threonyl-[protein] + CoA + H(+). Its function is as follows. Protein acetyltransferase with dual specificity triggering both N-alpha-acetylation (NTA), with a large spectrum of modified N-termini, including methionine, alanine, serine and to a lower extent threonine and valine as substrates, and epsilon-lysine acetylation (KA). The chain is GCN5-related N-acetyltransferase 5, chloroplastic from Arabidopsis thaliana (Mouse-ear cress).